Consider the following 363-residue polypeptide: Adenosine deaminase (363 aa).

Alanine 2 bears the N-acetylalanine mark. Zn(2+) is bound by residues histidine 15 and histidine 17. Substrate contacts are provided by histidine 17 and aspartate 19. At lysine 54 the chain carries N6-acetyllysine. Glycine 184 is a binding site for substrate. Position 214 (histidine 214) interacts with Zn(2+). The Proton donor role is filled by glutamate 217. Lysine 232 carries the N6-acetyllysine modification. Aspartate 295 is a Zn(2+) binding site. Substrate is bound at residue aspartate 296.

It belongs to the metallo-dependent hydrolases superfamily. Adenosine and AMP deaminases family. As to quaternary structure, interacts with DPP4 (via extracellular domain). Interacts with PLG (via Kringle 4 domain); the interaction stimulates PLG activation when in complex with DPP4. Requires Zn(2+) as cofactor. Expressed in gastrointestinal tissues (at protein level).

It localises to the cell membrane. The protein localises to the cell junction. Its subcellular location is the cytoplasmic vesicle lumen. The protein resides in the cytoplasm. It is found in the lysosome. The catalysed reaction is adenosine + H2O + H(+) = inosine + NH4(+). It catalyses the reaction 2'-deoxyadenosine + H2O + H(+) = 2'-deoxyinosine + NH4(+). It carries out the reaction cordycepin + H2O + H(+) = 3'-deoxyinosine + NH4(+). Its function is as follows. Catalyzes the hydrolytic deamination of adenosine and 2-deoxyadenosine. Plays an important role in purine metabolism and in adenosine homeostasis. Modulates signaling by extracellular adenosine, and so contributes indirectly to cellular signaling events. Acts as a positive regulator of T-cell coactivation, by binding DPP4. Its interaction with DPP4 regulates lymphocyte-epithelial cell adhesion. Enhances dendritic cell immunogenicity by affecting dendritic cell costimulatory molecule expression and cytokines and chemokines secretion. Enhances CD4+ T-cell differentiation and proliferation. Acts as a positive modulator of adenosine receptors ADORA1 and ADORA2A, by enhancing their ligand affinity via conformational change. Stimulates plasminogen activation. Plays a role in male fertility. Plays a protective role in early postimplantation embryonic development. Also responsible for the deamination of cordycepin (3'-deoxyadenosine), a fungal natural product that shows antitumor, antibacterial, antifungal, antivirus, and immune regulation properties. The protein is Adenosine deaminase (ADA) of Bos taurus (Bovine).